A 314-amino-acid polypeptide reads, in one-letter code: uncharacterized protein (314 aa).

The first 26 residues, 1-26 (MRGRVAGSCAPLGLLLVCLRLPGLFA), serve as a signal peptide directing secretion. Residues 41 to 60 (GTNLPQLGQPSLTGPPNSEH) are compositionally biased toward polar residues. 4 disordered regions span residues 41 to 65 (GTNLPQLGQPSLTGPPNSEHPQPAL), 77 to 96 (LKLSVPPSDGFPPAGGSAVQ), 147 to 191 (GSGP…GKIL), and 292 to 314 (PPGSSWNTPAGFPNPPSPGLQWG). Residues 147 to 157 (GSGPLPGESSP) are compositionally biased toward low complexity. Residues 167–177 (SHLHQDSESRR) show a composition bias toward basic and acidic residues. Residues 303–314 (FPNPPSPGLQWG) are compositionally biased toward pro residues.

In terms of assembly, binds to numerous extracellular matrix proteins. Taste cell specific.

Its subcellular location is the secreted. The protein resides in the extracellular space. The protein localises to the extracellular matrix. This is an uncharacterized protein from Macaca mulatta (Rhesus macaque).